Consider the following 268-residue polypeptide: Small ribosomal subunit protein eS1 (268 aa).

Residues 1 to 21 (MAVGKNKGLSKGGKKGGKKKV) form a disordered region.

This sequence belongs to the eukaryotic ribosomal protein eS1 family. Component of the small ribosomal subunit. Mature ribosomes consist of a small (40S) and a large (60S) subunit. The 40S subunit contains about 33 different proteins and 1 molecule of RNA (18S). The 60S subunit contains about 49 different proteins and 3 molecules of RNA (28S, 5.8S and 5S).

The protein resides in the cytoplasm. Essential for oogenesis; required for late follicle cell development. The protein is Small ribosomal subunit protein eS1 of Drosophila mojavensis (Fruit fly).